Consider the following 81-residue polypeptide: Small ribosomal subunit protein uS17 (81 aa).

This sequence belongs to the universal ribosomal protein uS17 family. As to quaternary structure, part of the 30S ribosomal subunit.

Functionally, one of the primary rRNA binding proteins, it binds specifically to the 5'-end of 16S ribosomal RNA. The protein is Small ribosomal subunit protein uS17 of Methylocella silvestris (strain DSM 15510 / CIP 108128 / LMG 27833 / NCIMB 13906 / BL2).